The sequence spans 998 residues: Calcium-transporting ATPase 3, endoplasmic reticulum-type (998 aa).

At 1-48 (MEDAYARSVSEVLDFFGVDPTKGLSDSQVVHHSRLYGRNVLPEEKRTP) the chain is on the cytoplasmic side. The chain crosses the membrane as a helical span at residues 49–69 (FWKLVLKQFDDLLVKILIVAA). Topologically, residues 70–89 (IVSFVLALANGETGLTAFLE) are lumenal. Residues 90–109 (PFVILLILAANAAVGVITET) traverse the membrane as a helical segment. The Cytoplasmic segment spans residues 110–250 (NAEKALEELR…DEATPLKKKL (141 aa)). Residues 251–270 (DEFGSFLAKVIAGICVLVWV) traverse the membrane as a helical segment. Residues 271-291 (VNIGHFSDPSHGGFFKGAIHY) lie on the Lumenal side of the membrane. A helical membrane pass occupies residues 292-309 (FKIAVALAVAAIPEGLPA). Ca(2+) is bound by residues Val-300, Ala-301, Ile-303, and Glu-305. Residues 310 to 746 (VVTTCLALGT…AEGRAIYNNT (437 aa)) lie on the Cytoplasmic side of the membrane. The active-site 4-aspartylphosphate intermediate is the Asp-347. Residues Asp-692 and Asp-696 each contribute to the Mg(2+) site. A helical membrane pass occupies residues 747-766 (KQFIRYMISSNIGEVVCIFV). Residues Asn-757 and Glu-760 each contribute to the Ca(2+) site. Over 767-776 (AAVLGIPDTL) the chain is Lumenal. A helical transmembrane segment spans residues 777 to 797 (APVQLLWVNLVTDGLPATAIG). Positions 785, 788, and 789 each coordinate Ca(2+). At 798-817 (FNKQDSDVMKAKPRKVGEAV) the chain is on the cytoplasmic side. Residues 818 to 840 (VTGWLFFRYLVIGVYVGLATVAG) form a helical membrane-spanning segment. Over 841–883 (FIWWFVYSDGGPKLTYSELMNFETCALRETTYPCSIFEDRHPS) the chain is Lumenal. The helical transmembrane segment at 884 to 903 (TVAMTVLVVVEMFNALNNLS) threads the bilayer. Residue Glu-894 participates in Ca(2+) binding. At 904–916 (ENQSLLVITPRSN) the chain is on the cytoplasmic side. The chain crosses the membrane as a helical span at residues 917-935 (LWLVGSIILTMLLHVLILY). The Lumenal segment spans residues 936 to 950 (VHPLAVLFSVTPLSW). The chain crosses the membrane as a helical span at residues 951-971 (AEWTAVLYLSFPVIIIDELLK). The Cytoplasmic segment spans residues 972–998 (FLSRNTGMRFRFRLRKADLLPKDRRDK).

Belongs to the cation transport ATPase (P-type) (TC 3.A.3) family. Type IIA subfamily. Expressed in root cap, in elongation and differentiation zones of roots, in vascular tissues of roots, leaves, floral pedicels and style, in leaves, including hydathodes and guard cells, in stamens, in petals, in sepals and in siliques.

The protein resides in the golgi apparatus membrane. It is found in the endosome membrane. It localises to the prevacuolar compartment membrane. The enzyme catalyses Ca(2+)(in) + ATP + H2O = Ca(2+)(out) + ADP + phosphate + H(+). Its function is as follows. This magnesium-dependent enzyme catalyzes the hydrolysis of ATP coupled with the translocation of calcium from the cytosol to an endomembrane compartment. Involved in calcium-enhanced root growth, in tolerance to toxic levels of manganese and in secretory processes. Has a crucial role in manganese nutrition, but is not involved in transporting copper, iron or zinc. The chain is Calcium-transporting ATPase 3, endoplasmic reticulum-type from Arabidopsis thaliana (Mouse-ear cress).